The following is a 212-amino-acid chain: Phosphatidylserine decarboxylase proenzyme (212 aa).

Serine 182 acts as the Schiff-base intermediate with substrate; via pyruvic acid in catalysis. Position 182 is a pyruvic acid (Ser); by autocatalysis (serine 182).

The protein belongs to the phosphatidylserine decarboxylase family. PSD-A subfamily. Heterodimer of a large membrane-associated beta subunit and a small pyruvoyl-containing alpha subunit. It depends on pyruvate as a cofactor. In terms of processing, is synthesized initially as an inactive proenzyme. Formation of the active enzyme involves a self-maturation process in which the active site pyruvoyl group is generated from an internal serine residue via an autocatalytic post-translational modification. Two non-identical subunits are generated from the proenzyme in this reaction, and the pyruvate is formed at the N-terminus of the alpha chain, which is derived from the carboxyl end of the proenzyme. The post-translation cleavage follows an unusual pathway, termed non-hydrolytic serinolysis, in which the side chain hydroxyl group of the serine supplies its oxygen atom to form the C-terminus of the beta chain, while the remainder of the serine residue undergoes an oxidative deamination to produce ammonia and the pyruvoyl prosthetic group on the alpha chain.

The protein resides in the cell membrane. It catalyses the reaction a 1,2-diacyl-sn-glycero-3-phospho-L-serine + H(+) = a 1,2-diacyl-sn-glycero-3-phosphoethanolamine + CO2. Its pathway is phospholipid metabolism; phosphatidylethanolamine biosynthesis; phosphatidylethanolamine from CDP-diacylglycerol: step 2/2. Functionally, catalyzes the formation of phosphatidylethanolamine (PtdEtn) from phosphatidylserine (PtdSer). The sequence is that of Phosphatidylserine decarboxylase proenzyme from Chlorobium luteolum (strain DSM 273 / BCRC 81028 / 2530) (Pelodictyon luteolum).